A 510-amino-acid chain; its full sequence is Cytochrome P450 4A6 (510 aa).

The propeptide occupies 1–4 (MSVS). 2 residues coordinate heme: E321 and C457.

The protein belongs to the cytochrome P450 family. It depends on heme as a cofactor. In terms of tissue distribution, liver; kidney.

It is found in the endoplasmic reticulum membrane. It localises to the microsome membrane. The catalysed reaction is an omega-methyl-long-chain fatty acid + reduced [NADPH--hemoprotein reductase] + O2 = an omega-hydroxy-long-chain fatty acid + oxidized [NADPH--hemoprotein reductase] + H2O + H(+). Cytochromes P450 are a group of heme-thiolate monooxygenases. In liver microsomes, this enzyme is involved in an NADPH-dependent electron transport pathway. It oxidizes a variety of structurally unrelated compounds, including steroids, fatty acids, and xenobiotics. Functionally, the kidney P-450 system is rather specialized for the omega-hydroxylation of fatty acids. Both P450-KA1 and P450-KA2 catalyze the omega- and (omega-1)-hydroxylation of various fatty acids with no drug-metabolizing activity, and hydroxylate prostaglandin A1 and A2 solely at the omega-position. The protein is Cytochrome P450 4A6 (CYP4A6) of Oryctolagus cuniculus (Rabbit).